We begin with the raw amino-acid sequence, 454 residues long: UPF0210 protein Mhun_2657 (454 aa).

Belongs to the UPF0210 family.

The polypeptide is UPF0210 protein Mhun_2657 (Methanospirillum hungatei JF-1 (strain ATCC 27890 / DSM 864 / NBRC 100397 / JF-1)).